A 734-amino-acid chain; its full sequence is Photosystem I P700 chlorophyll a apoprotein A2 (734 aa).

A run of 8 helical transmembrane segments spans residues 46-69 (IFASHFGQLAIIFLWTSGNLFHVA), 135-158 (LYTGALFLLFLSAISLIAGWLHLQ), 175-199 (LNHHLSGLFGVSSLAWTGHLVHVAI), 273-291 (IAHHHLAIAFIFLVAGHMY), 330-353 (LHFQLGLALASLGVITSLVAQHMY), 369-395 (AALYTHHQYIAGFIMTGAFAHGAILVI), 417-439 (AIISHLSWASLFLGFHTLGLYVH), and 517-535 (FLVHHAIALGLHTTTLILV). [4Fe-4S] cluster-binding residues include Cys-559 and Cys-568. A run of 2 helical transmembrane segments spans residues 575–596 (AFYLAVFWMLNTIGWVTFYWHW) and 643–665 (LSVWAWMFLFGHLVWATGFMFLI). His-654, Met-662, and Tyr-670 together coordinate chlorophyll a. Residue Trp-671 participates in phylloquinone binding. The helical transmembrane segment at 707–727 (LVGLAHFSVGYIFTYAAFLIA) threads the bilayer.

It belongs to the PsaA/PsaB family. The PsaA/B heterodimer binds the P700 chlorophyll special pair and subsequent electron acceptors. PSI consists of a core antenna complex that captures photons, and an electron transfer chain that converts photonic excitation into a charge separation. The eukaryotic PSI reaction center is composed of at least 11 subunits. P700 is a chlorophyll a/chlorophyll a' dimer, A0 is one or more chlorophyll a, A1 is one or both phylloquinones and FX is a shared 4Fe-4S iron-sulfur center. is required as a cofactor.

Its subcellular location is the plastid. It localises to the chloroplast thylakoid membrane. The enzyme catalyses reduced [plastocyanin] + hnu + oxidized [2Fe-2S]-[ferredoxin] = oxidized [plastocyanin] + reduced [2Fe-2S]-[ferredoxin]. Functionally, psaA and PsaB bind P700, the primary electron donor of photosystem I (PSI), as well as the electron acceptors A0, A1 and FX. PSI is a plastocyanin-ferredoxin oxidoreductase, converting photonic excitation into a charge separation, which transfers an electron from the donor P700 chlorophyll pair to the spectroscopically characterized acceptors A0, A1, FX, FA and FB in turn. Oxidized P700 is reduced on the lumenal side of the thylakoid membrane by plastocyanin. The polypeptide is Photosystem I P700 chlorophyll a apoprotein A2 (Atropa belladonna (Belladonna)).